Here is a 99-residue protein sequence, read N- to C-terminus: Large ribosomal subunit protein eL21 (99 aa).

Belongs to the eukaryotic ribosomal protein eL21 family.

In Staphylothermus marinus (strain ATCC 43588 / DSM 3639 / JCM 9404 / F1), this protein is Large ribosomal subunit protein eL21.